The chain runs to 1890 residues: Callose synthase 9 (1890 aa).

Over Met-1 to His-489 the chain is Cytoplasmic. A helical transmembrane segment spans residues Ser-490–Phe-510. The Extracellular portion of the chain corresponds to Asn-511–Gln-523. A helical membrane pass occupies residues Ile-524–Ile-544. Over Met-545–Arg-560 the chain is Cytoplasmic. A helical membrane pass occupies residues Ile-561–Lys-581. Residues Ser-582–Pro-591 lie on the Extracellular side of the membrane. Residues Ile-592 to Ile-612 traverse the membrane as a helical segment. Residues Leu-613–Lys-658 are Cytoplasmic-facing. A helical transmembrane segment spans residues Tyr-659–Ile-679. The Extracellular portion of the chain corresponds to Lys-680–Ala-722. The helical transmembrane segment at Ile-723–Leu-743 threads the bilayer. The Cytoplasmic portion of the chain corresponds to Gly-744–Ser-1457. The chain crosses the membrane as a helical span at residues Phe-1458–Ile-1478. Residues Phe-1479–Asn-1512 lie on the Extracellular side of the membrane. A helical transmembrane segment spans residues Ala-1513–Leu-1533. Topologically, residues Glu-1534–Gln-1539 are cytoplasmic. Residues Ala-1540–Leu-1560 form a helical membrane-spanning segment. The Extracellular segment spans residues Gly-1561 to Glu-1609. The next 2 membrane-spanning stretches (helical) occupy residues Val-1610 to Tyr-1630 and Ile-1631 to Phe-1651. The Extracellular portion of the chain corresponds to Asn-1652–Arg-1703. Residues Ile-1704–Leu-1724 traverse the membrane as a helical segment. The Cytoplasmic segment spans residues Lys-1725–Ser-1732. Residues Phe-1733–Phe-1753 form a helical membrane-spanning segment. Topologically, residues Thr-1754–Arg-1768 are extracellular. The helical transmembrane segment at Phe-1769–Thr-1789 threads the bilayer. Topologically, residues Pro-1790–Asp-1795 are cytoplasmic. The chain crosses the membrane as a helical span at residues Ile-1796–Ala-1816. Residues Trp-1817–Asp-1838 are Extracellular-facing. A helical transmembrane segment spans residues Ala-1839–Ser-1859. The Cytoplasmic portion of the chain corresponds to Thr-1860–Leu-1890.

It belongs to the glycosyltransferase 48 family.

Its subcellular location is the cell membrane. The enzyme catalyses [(1-&gt;3)-beta-D-glucosyl](n) + UDP-alpha-D-glucose = [(1-&gt;3)-beta-D-glucosyl](n+1) + UDP + H(+). In terms of biological role, involved in sporophytic and gametophytic development. Required for normal plant development. During pollen formation, required for the entry of microspores into mitosis and microspore symmetric division. May be required for correct temporal and spatial control of callose deposition during pollen mitosis. During plant growth and development, callose is found as a transitory component of the cell plate in dividing cells, is a major component of pollen mother cell walls and pollen tubes, and is found as a structural component of plasmodesmatal canals. This Arabidopsis thaliana (Mouse-ear cress) protein is Callose synthase 9 (CALS9).